A 169-amino-acid chain; its full sequence is MDVEAFYKISYGLYIVTSESNGRKCGQIANTVFQLTSKPVQIAVCLNKENDTHNAVKESGAFGVSVLELETPMEFIGRFGFRKSSEFEKFDGVEYKTGKTGVPLVTQHAVAVIEAKVVKECDVGTHTLFVGEAVDAEVLKDAEVLTYADYHLMKKGKTPRTATVYFESK.

An NADP(+)-binding site is contributed by Tyr-7. Residues Gln-27–Thr-31, Cys-45–Thr-52, Arg-82–Ser-84, and Lys-89 contribute to the FMN site. Residues His-126 and Tyr-147–Lys-154 each bind NADP(+).

This sequence belongs to the non-flavoprotein flavin reductase family. Homodimer. FMN serves as cofactor. The cofactor is FAD.

It catalyses the reaction 2 a Fe(II)-siderophore + NAD(+) + H(+) = 2 a Fe(III)-siderophore + NADH. The enzyme catalyses 2 a Fe(II)-siderophore + NADP(+) + H(+) = 2 a Fe(III)-siderophore + NADPH. Its function is as follows. Catalyzes the reduction of bound ferric iron (Fe(3+)) in a variety of iron chelators (siderophores) using NAD(P)H as the electron donor, resulting in the release of Fe(2+). Not active with uncomplexed Fe(3+). Also reduces FMN and FAD, but not riboflavin. In Archaeoglobus fulgidus (strain ATCC 49558 / DSM 4304 / JCM 9628 / NBRC 100126 / VC-16), this protein is Ferric-chelate reductase (NAD(P)H).